Reading from the N-terminus, the 209-residue chain is Ribonuclease HII (209 aa).

Residues 7 to 198 (GPVAGVDEAG…VAKAHQEWLH (192 aa)) form the RNase H type-2 domain. Residues aspartate 13, glutamate 14, and aspartate 107 each coordinate a divalent metal cation.

This sequence belongs to the RNase HII family. Mn(2+) is required as a cofactor. The cofactor is Mg(2+).

It is found in the cytoplasm. The enzyme catalyses Endonucleolytic cleavage to 5'-phosphomonoester.. Its function is as follows. Endonuclease that specifically degrades the RNA of RNA-DNA hybrids. The chain is Ribonuclease HII from Corynebacterium glutamicum (strain ATCC 13032 / DSM 20300 / JCM 1318 / BCRC 11384 / CCUG 27702 / LMG 3730 / NBRC 12168 / NCIMB 10025 / NRRL B-2784 / 534).